The following is a 117-amino-acid chain: Shadow of prion protein (117 aa).

The N-terminal stretch at 1–24 is a signal peptide; that stretch reads MRQRVACCWVLLLLAATFCQPAAA. N-linked (GlcNAc...) asparagine glycosylation is present at Asn-87. Ala-104 carries GPI-anchor amidated alanine lipidation. A propeptide spans 105 to 117 (removed in mature form); that stretch reads MPWLCPLAAILHH.

This sequence belongs to the SPRN family.

It localises to the cell membrane. In terms of biological role, prion-like protein that has PrP(C)-like neuroprotective activity. The polypeptide is Shadow of prion protein (SPRN) (Gallus gallus (Chicken)).